The chain runs to 284 residues: MRINGHTRMAAVVAKPIKHSISPLIHNMAFEKTGVNGVYLAWEVEAKDLQASIENIRRYDMFGVNLSMPYKQEVIPYLDELDVSARLIGAVNTVVNKNGILVGYNTDGKGFFKSLPSFAIRGKKMTILGAGGAATAIIAQAALYNAEEIFVFTRQASYEKIVSKMAAISHQTKSRIQVLTLEDADSLQDKINQSDLLVNGTSLGMDGVSMPLPEQLELPSQILVADVIYQPFETPFLKWARNQNVTAVNGLGMLLYQGAEAFELWTGKPMPSQEIWQCLEELYK.

Shikimate contacts are provided by residues 20 to 22 (SIS) and serine 67. Lysine 71 (proton acceptor) is an active-site residue. Asparagine 92 and aspartate 107 together coordinate shikimate. Residues 129–133 (GAGGA) and valine 227 contribute to the NADP(+) site. Tyrosine 229 is a binding site for shikimate. An NADP(+)-binding site is contributed by glycine 250.

The protein belongs to the shikimate dehydrogenase family. As to quaternary structure, homodimer.

The enzyme catalyses shikimate + NADP(+) = 3-dehydroshikimate + NADPH + H(+). It functions in the pathway metabolic intermediate biosynthesis; chorismate biosynthesis; chorismate from D-erythrose 4-phosphate and phosphoenolpyruvate: step 4/7. Its function is as follows. Involved in the biosynthesis of the chorismate, which leads to the biosynthesis of aromatic amino acids. Catalyzes the reversible NADPH linked reduction of 3-dehydroshikimate (DHSA) to yield shikimate (SA). The protein is Shikimate dehydrogenase (NADP(+)) of Streptococcus sanguinis (strain SK36).